Reading from the N-terminus, the 201-residue chain is Single-stranded DNA-binding protein DdrA (201 aa).

The protein belongs to the RAD52 family. In terms of assembly, the truncated form (1-160) of DdrA forms heptameric rings that can assemble into a 3-ring structure.

Its function is as follows. ssDNA-binding protein that contributes to the ionizing radiation resistance of D.deserti. Plays a role in DNA repair and genome reconstitution, in a RecA-independent process, since DdrA is essential for recovery from severe genomic fragmentation as a result of exposure to severe levels of ionizing radiation in an environment lacking nutrients. In vitro, binds to the 3'-ends of single-stranded DNA, and probably protects them from nuclease degradation. Thus, DdrA is part of a DNA end-protection system that helps to preserve genome integrity following irradiation or desiccation. The chain is Single-stranded DNA-binding protein DdrA (ddrA) from Deinococcus deserti (strain DSM 17065 / CIP 109153 / LMG 22923 / VCD115).